A 120-amino-acid polypeptide reads, in one-letter code: Small ribosomal subunit protein uS13 (120 aa).

The disordered stretch occupies residues 93–120 (GLPVRGQNTKNNARTRKGPRRTVANKKK). Over residues 105–120 (ARTRKGPRRTVANKKK) the composition is skewed to basic residues.

It belongs to the universal ribosomal protein uS13 family. As to quaternary structure, part of the 30S ribosomal subunit. Has been shown to cross-link to S19 forming a loose heterodimer. Forms two bridges to the 50S subunit in the 70S ribosome.

Its function is as follows. Located at the top of the head of the 30S subunit, it contacts several helices of the 16S rRNA. In the 70S ribosome it contacts the 23S rRNA (bridge B1a) and protein L5 of the 50S subunit (bridge B1b), connecting the 2 subunits; these bridges are implicated in subunit movement. Contacts the tRNA in the A and P-sites. The polypeptide is Small ribosomal subunit protein uS13 (rpsM) (Geobacillus stearothermophilus (Bacillus stearothermophilus)).